A 160-amino-acid chain; its full sequence is Crossover junction endodeoxyribonuclease RuvC (160 aa).

Active-site residues include Asp-9, Glu-68, and Asp-141. Mg(2+) is bound by residues Asp-9, Glu-68, and Asp-141.

Belongs to the RuvC family. As to quaternary structure, homodimer which binds Holliday junction (HJ) DNA. The HJ becomes 2-fold symmetrical on binding to RuvC with unstacked arms; it has a different conformation from HJ DNA in complex with RuvA. In the full resolvosome a probable DNA-RuvA(4)-RuvB(12)-RuvC(2) complex forms which resolves the HJ. Requires Mg(2+) as cofactor.

It localises to the cytoplasm. It catalyses the reaction Endonucleolytic cleavage at a junction such as a reciprocal single-stranded crossover between two homologous DNA duplexes (Holliday junction).. The RuvA-RuvB-RuvC complex processes Holliday junction (HJ) DNA during genetic recombination and DNA repair. Endonuclease that resolves HJ intermediates. Cleaves cruciform DNA by making single-stranded nicks across the HJ at symmetrical positions within the homologous arms, yielding a 5'-phosphate and a 3'-hydroxyl group; requires a central core of homology in the junction. The consensus cleavage sequence is 5'-(A/T)TT(C/G)-3'. Cleavage occurs on the 3'-side of the TT dinucleotide at the point of strand exchange. HJ branch migration catalyzed by RuvA-RuvB allows RuvC to scan DNA until it finds its consensus sequence, where it cleaves and resolves the cruciform DNA. This chain is Crossover junction endodeoxyribonuclease RuvC, found in Campylobacter jejuni subsp. jejuni serotype O:2 (strain ATCC 700819 / NCTC 11168).